A 210-amino-acid polypeptide reads, in one-letter code: THAP domain-containing protein 1 (210 aa).

A THAP-type zinc finger spans residues 5–57; the sequence is CSAYGCKNRYDKDKPVSFHKFPLTRPSLCKQWEAAVKRKNFKPTKYSSICSEH. Residues 131 to 134 carry the HCFC1-binding motif (HBM) motif; sequence DHNY. The stretch at 137–187 forms a coiled coil; sequence EDTMHQRKRILQLEQQVEKLRKKLKTAQQRCRRQERQLEKLKEVVHFQREK.

Belongs to the THAP1 family. Interacts with PAWR. Component of a THAP1/THAP3-HCFC1-OGT complex that contains, either THAP1 or THAP3, HCFC1 and OGT. Interacts with OGT. Interacts (via the HBM) with HCFC1 (via the Kelch-repeat domain); the interaction recruits HCFC1 to the RRM1 promoter. In terms of tissue distribution, highest levels in heart, liver and kidney. Lower levels in brain and lung.

The protein resides in the nucleus. It is found in the nucleoplasm. The protein localises to the PML body. Functionally, DNA-binding transcription regulator that regulates endothelial cell proliferation and G1/S cell-cycle progression. Specifically binds the 5'-[AT]NTNN[GT]GGCA[AGT]-3' core DNA sequence and acts by modulating expression of pRB-E2F cell-cycle target genes, including RRM1. Component of a THAP1/THAP3-HCFC1-OGT complex that is required for the regulation of the transcriptional activity of RRM1. May also have pro-apoptotic activity by potentiating both serum-withdrawal and TNF-induced apoptosis. The polypeptide is THAP domain-containing protein 1 (Thap1) (Mus musculus (Mouse)).